A 256-amino-acid chain; its full sequence is Imidazole glycerol phosphate synthase subunit HisF (256 aa).

Catalysis depends on residues Asp-11 and Asp-130.

This sequence belongs to the HisA/HisF family. As to quaternary structure, heterodimer of HisH and HisF.

The protein localises to the cytoplasm. The enzyme catalyses 5-[(5-phospho-1-deoxy-D-ribulos-1-ylimino)methylamino]-1-(5-phospho-beta-D-ribosyl)imidazole-4-carboxamide + L-glutamine = D-erythro-1-(imidazol-4-yl)glycerol 3-phosphate + 5-amino-1-(5-phospho-beta-D-ribosyl)imidazole-4-carboxamide + L-glutamate + H(+). It participates in amino-acid biosynthesis; L-histidine biosynthesis; L-histidine from 5-phospho-alpha-D-ribose 1-diphosphate: step 5/9. Its function is as follows. IGPS catalyzes the conversion of PRFAR and glutamine to IGP, AICAR and glutamate. The HisF subunit catalyzes the cyclization activity that produces IGP and AICAR from PRFAR using the ammonia provided by the HisH subunit. The protein is Imidazole glycerol phosphate synthase subunit HisF of Cupriavidus pinatubonensis (strain JMP 134 / LMG 1197) (Cupriavidus necator (strain JMP 134)).